The following is a 160-amino-acid chain: UPF0178 protein PSPA7_5991 (160 aa).

This sequence belongs to the UPF0178 family.

This Pseudomonas paraeruginosa (strain DSM 24068 / PA7) (Pseudomonas aeruginosa (strain PA7)) protein is UPF0178 protein PSPA7_5991.